A 361-amino-acid chain; its full sequence is Probable purine permease 13 (361 aa).

The next 10 helical transmembrane spans lie at 35–55 (WILV…AVLL), 68–88 (WIST…LCFL), 103–123 (LVWI…LYSF), 129–151 (SAST…SYYI), 156–176 (ITCL…LVSL), 192–212 (LIGC…LSLM), 238–258 (VASC…LLSV), 268–288 (VIYV…SVGA), 289–309 (VALI…LSLI), and 323–343 (LTEV…FYIY).

This sequence belongs to the purine permeases (TC 2.A.7.14) family.

It localises to the membrane. This Arabidopsis thaliana (Mouse-ear cress) protein is Probable purine permease 13 (PUP13).